The following is a 255-amino-acid chain: BTB/POZ domain-containing protein KCTD14 (255 aa).

The interval 1–29 (MWQGCAVERPVGRMTSQTPLPQSPRPRRP) is disordered. The BTB domain maps to 33-130 (TVVELNVGGE…LLEDMPQIFG (98 aa)).

This is BTB/POZ domain-containing protein KCTD14 (KCTD14) from Homo sapiens (Human).